The sequence spans 123 residues: uncharacterized protein (123 aa).

Residues 14-34 traverse the membrane as a helical segment; it reads VVLKITAVVCSVFSIRVLILA.

The protein localises to the membrane. This is an uncharacterized protein from Saccharomyces cerevisiae (strain ATCC 204508 / S288c) (Baker's yeast).